We begin with the raw amino-acid sequence, 147 residues long: Nucleoside diphosphate kinase (147 aa).

6 residues coordinate ATP: Lys9, Phe57, Arg85, Thr91, Arg102, and Asn112. His115 (pros-phosphohistidine intermediate) is an active-site residue.

The protein belongs to the NDK family. As to quaternary structure, homotetramer. The cofactor is Mg(2+).

The protein localises to the cytoplasm. It carries out the reaction a 2'-deoxyribonucleoside 5'-diphosphate + ATP = a 2'-deoxyribonucleoside 5'-triphosphate + ADP. The catalysed reaction is a ribonucleoside 5'-diphosphate + ATP = a ribonucleoside 5'-triphosphate + ADP. Its function is as follows. Major role in the synthesis of nucleoside triphosphates other than ATP. The ATP gamma phosphate is transferred to the NDP beta phosphate via a ping-pong mechanism, using a phosphorylated active-site intermediate. The protein is Nucleoside diphosphate kinase of Kosmotoga olearia (strain ATCC BAA-1733 / DSM 21960 / TBF 19.5.1).